Here is a 325-residue protein sequence, read N- to C-terminus: Ribonucleoside-diphosphate reductase small chain (325 aa).

Fe cation is bound by residues D74, E105, and H108. Y112 is a catalytic residue. E168, E202, and H205 together coordinate Fe cation.

It belongs to the ribonucleoside diphosphate reductase small chain family. As to quaternary structure, heterodimer of a large and a small chain. The cofactor is Fe cation.

The enzyme catalyses a 2'-deoxyribonucleoside 5'-diphosphate + [thioredoxin]-disulfide + H2O = a ribonucleoside 5'-diphosphate + [thioredoxin]-dithiol. Ribonucleoside-diphosphate reductase holoenzyme provides the precursors necessary for viral DNA synthesis. Allows virus growth in non-dividing cells. Catalyzes the biosynthesis of deoxyribonucleotides from the corresponding ribonucleotides. This Yaba-like disease virus (YLDV) protein is Ribonucleoside-diphosphate reductase small chain.